The primary structure comprises 805 residues: Replication restart protein PriA (805 aa).

Positions 1–110 are 3'BD; that stretch reads MNFAEVIVDV…QAMLPAALKA (110 aa). The segment at 111 to 166 is linker; the sequence is KYEKELKIAHGADLPPQVERLFSETKTLLYSDIPDHETLKLIQRHVQKGDIDVTYK. The tract at residues 167 to 253 is WH; the sequence is VAQKTNKKMV…KESYEEVYRD (87 aa). In terms of domain architecture, Helicase ATP-binding spans 282–448; sequence TLDSDEHKVF…QKGVYELLSL (167 aa). 295–302 provides a ligand contact to ATP; sequence GVTGSGKT. Residues 391–394 carry the DEAH box motif; the sequence is DEEH. The Zn(2+) site is built by Cys510, Cys513, Cys519, Cys522, Cys537, Cys540, Cys550, and Cys553. One can recognise a Helicase C-terminal domain in the interval 545 to 699; that stretch reads PVPHTCPECA…TFYQHEMAHR (155 aa).

The protein belongs to the helicase family. PriA subfamily. In terms of assembly, monomer. Component of the replication restart primosome which assembles in this order; PriA, DnaD then DnaB. The preferred DNA substrate mimics an arrested DNA replication fork with unreplicated lagging strand. Interacts with DnaD but not DnaB. Interacts with SSB (sbbA) via the latter's 35 residue C-terminal tail which tethers PriA to ssDNA. Colocalizes with DNA pol III subunit gamma/tau (dnaX). May interact with RarA. Zn(2+) is required as a cofactor.

Its subcellular location is the cytoplasm. It localises to the nucleoid. The catalysed reaction is Couples ATP hydrolysis with the unwinding of duplex DNA by translocating in the 3'-5' direction.. It catalyses the reaction ATP + H2O = ADP + phosphate + H(+). Initiates the restart of stalled replication forks, which reloads the replicative helicase on sites other than the origin of replication. Recognizes and binds to abandoned replication forks and remodels them to uncover a helicase loading site. Promotes assembly of the primosome at these replication forks. Serves as the initiating protein for assembly of the replication restart primosome; binding of PriA to an arrested DNA replication fork with unreplicated lagging strand triggers assembly. Sequentially DnaD (possibly as a dimer) and DnaB homotetramers bind. Assembly probably continues by loading of the DnaC replicative helicase aided by helicase loader DnaI. A single-strand (ss)DNA-dependent ATPase with helicase activity. Recognizes and binds the arrested nascent DNA chain at stalled replication forks. Binds forked DNA substrates and makes a larger complex with RarA; RarA has no effect on the helicase function. Binds ssDNA, D-loops and replication fork-like substrates but not double-stranded (ds)DNA; the preferred DNA substrate mimics an arrested DNA replication fork with an unreplicated lagging strand. Recognizes nicked dsDNA. A supershift on ssDNA occurs in the presence of single-stranded binding protein (SSB). Cannot substitute for E.coli PriA. In terms of biological role, required for replication of plasmids that have a rolling circle mechanism, which produces circular single-stranded (ss)DNA intermediates corresponding to the lagging strand template, which are then converted into double-stranded (ds)DNA; priA is required to activate the conversion of ssDNA into dsDNA. The protein is Replication restart protein PriA of Bacillus subtilis (strain 168).